The chain runs to 390 residues: Putative F-box protein At3g52320 (390 aa).

In terms of domain architecture, F-box spans 21 to 71; sequence VVFLPEIPEEMLIDILIRLPAKSLMRFKCVSKLWLSLITSRYFTNRFFKPS.

The sequence is that of Putative F-box protein At3g52320 from Arabidopsis thaliana (Mouse-ear cress).